We begin with the raw amino-acid sequence, 45 residues long: NLR family pyrin domain-containing protein 2B (45 aa).

In terms of tissue distribution, expressed in all tissues tested, including spleen, lymph node, thymus, tonsil, peripheral blood leukocyte, bone marrow, liver, heart, brain, placenta, lung, skeletal muscle, kidney and pancreas.

The protein localises to the cytoplasm. It localises to the nucleus. Functionally, may function as a negative regulator of NF-kappa-B by preventing RELA/p65 phosphorylation at 'Ser-536', thereby inhibiting its transcriptional activity. Through NF-kappa-B regulation may control cytokine release upon Toll-like receptors activation and therefore play a role in modulation of innate immunity. May also play a role in cell cycle progression and apoptotic process. This is NLR family pyrin domain-containing protein 2B from Homo sapiens (Human).